Here is a 120-residue protein sequence, read N- to C-terminus: MKILFVLISILYAVYCFSSEEDVDSAYLANELEPVEDINSEQYAALEPKEEQERSCADMGQDRKDDCDCCLNIATCNCWFGRYFCSCTFGDYQTCLRKKGKCKRNRPQSCPRSNLNRKKG.

The first 16 residues, 1–16, serve as a signal peptide directing secretion; that stretch reads MKILFVLISILYAVYC. Positions 17–54 are excised as a propeptide; it reads FSSEEDVDSAYLANELEPVEDINSEQYAALEPKEEQER. 3 disulfide bridges follow: C56-C70, C69-C87, and C78-C85. Positions 56-95 constitute an Agouti domain; it reads CADMGQDRKDDCDCCLNIATCNCWFGRYFCSCTFGDYQTC.

This sequence belongs to the neurotoxin 05 (agouti) family. In terms of processing, contains 5 disulfide bonds. In terms of tissue distribution, expressed by the venom gland.

The protein resides in the secreted. The protein is U13-lycotoxin-Ls1c of Lycosa singoriensis (Wolf spider).